We begin with the raw amino-acid sequence, 98 residues long: NADH-ubiquinone oxidoreductase chain 4L (98 aa).

3 helical membrane passes run methionine 1 to leucine 21, leucine 24 to isoleucine 44, and leucine 61 to leucine 81.

The protein belongs to the complex I subunit 4L family.

It localises to the mitochondrion membrane. The catalysed reaction is a ubiquinone + NADH + 5 H(+)(in) = a ubiquinol + NAD(+) + 4 H(+)(out). Functionally, core subunit of the mitochondrial membrane respiratory chain NADH dehydrogenase (Complex I) that is believed to belong to the minimal assembly required for catalysis. Complex I functions in the transfer of electrons from NADH to the respiratory chain. The immediate electron acceptor for the enzyme is believed to be ubiquinone. This Pisaster ochraceus (Ochre sea star) protein is NADH-ubiquinone oxidoreductase chain 4L (ND4L).